The primary structure comprises 182 residues: Adenine phosphoribosyltransferase (182 aa).

It belongs to the purine/pyrimidine phosphoribosyltransferase family. As to quaternary structure, homodimer.

The protein localises to the cytoplasm. It catalyses the reaction AMP + diphosphate = 5-phospho-alpha-D-ribose 1-diphosphate + adenine. It functions in the pathway purine metabolism; AMP biosynthesis via salvage pathway; AMP from adenine: step 1/1. Catalyzes a salvage reaction resulting in the formation of AMP, that is energically less costly than de novo synthesis. In Campylobacter curvus (strain 525.92), this protein is Adenine phosphoribosyltransferase.